The primary structure comprises 233 residues: Low affinity immunoglobulin gamma Fc region receptor III-B (233 aa).

Residues 1 to 16 (MWQLLLPTALLLLVSA) form the signal peptide. 2 Ig-like C2-type domains span residues 40-96 (KDSV…LSTL) and 121-179 (EDPI…VGSK). Cys-47 and Cys-89 are disulfide-bonded. Asn-56, Asn-63, Asn-82, and Asn-92 each carry an N-linked (GlcNAc...) asparagine glycan. Cys-128 and Cys-172 are oxidised to a cystine. N-linked (GlcNAc...) asparagine glycans are attached at residues Asn-180 and Asn-187. Ser-200 carries GPI-anchor amidated serine lipidation. Residues 201-233 (SFSPPGYQVSFCLVMVLLFAVDTGLYFSVKTNI) constitute a propeptide, removed in mature form.

As to quaternary structure, monomer. Interacts with INPP5D/SHIP1. In terms of processing, glycosylated. Glycosylation plays an inhibitory role in the interaction with IgG3. The soluble form is produced by a proteolytic cleavage. As to expression, expressed specifically by polymorphonuclear leukocytes (neutrophils). Also expressed by stimulated eosinophils.

It localises to the cell membrane. The protein resides in the secreted. Receptor for the Fc region of immunoglobulins gamma. Low affinity receptor. Binds complexed or aggregated IgG and also monomeric IgG. Contrary to III-A, is not capable to mediate antibody-dependent cytotoxicity and phagocytosis. May serve as a trap for immune complexes in the peripheral circulation which does not activate neutrophils. The chain is Low affinity immunoglobulin gamma Fc region receptor III-B (FCGR3B) from Homo sapiens (Human).